The chain runs to 704 residues: Elongation factor G 1 (704 aa).

One can recognise a tr-type G domain in the interval 8-285 (EKIRNIGISA…AVCAFLPNPK (278 aa)). Residues 17–24 (AHIDSGKT), 84–88 (DTPGH), and 138–141 (NKMD) each bind GTP.

This sequence belongs to the TRAFAC class translation factor GTPase superfamily. Classic translation factor GTPase family. EF-G/EF-2 subfamily.

The protein resides in the cytoplasm. In terms of biological role, catalyzes the GTP-dependent ribosomal translocation step during translation elongation. During this step, the ribosome changes from the pre-translocational (PRE) to the post-translocational (POST) state as the newly formed A-site-bound peptidyl-tRNA and P-site-bound deacylated tRNA move to the P and E sites, respectively. Catalyzes the coordinated movement of the two tRNA molecules, the mRNA and conformational changes in the ribosome. In Myxococcus xanthus (strain DK1622), this protein is Elongation factor G 1.